Here is a 271-residue protein sequence, read N- to C-terminus: Formamidopyrimidine-DNA glycosylase (271 aa).

The Schiff-base intermediate with DNA role is filled by Pro-2. Residue Glu-3 is the Proton donor of the active site. The active-site Proton donor; for beta-elimination activity is the Lys-57. DNA is bound by residues His-90, Arg-109, and Lys-151. The segment at His-236 to Thr-270 adopts an FPG-type zinc-finger fold. Arg-260 functions as the Proton donor; for delta-elimination activity in the catalytic mechanism.

This sequence belongs to the FPG family. As to quaternary structure, monomer. It depends on Zn(2+) as a cofactor.

The catalysed reaction is Hydrolysis of DNA containing ring-opened 7-methylguanine residues, releasing 2,6-diamino-4-hydroxy-5-(N-methyl)formamidopyrimidine.. It catalyses the reaction 2'-deoxyribonucleotide-(2'-deoxyribose 5'-phosphate)-2'-deoxyribonucleotide-DNA = a 3'-end 2'-deoxyribonucleotide-(2,3-dehydro-2,3-deoxyribose 5'-phosphate)-DNA + a 5'-end 5'-phospho-2'-deoxyribonucleoside-DNA + H(+). Its function is as follows. Involved in base excision repair of DNA damaged by oxidation or by mutagenic agents. Acts as a DNA glycosylase that recognizes and removes damaged bases. Has a preference for oxidized purines, such as 7,8-dihydro-8-oxoguanine (8-oxoG). Has AP (apurinic/apyrimidinic) lyase activity and introduces nicks in the DNA strand. Cleaves the DNA backbone by beta-delta elimination to generate a single-strand break at the site of the removed base with both 3'- and 5'-phosphates. In Shewanella baltica (strain OS155 / ATCC BAA-1091), this protein is Formamidopyrimidine-DNA glycosylase.